A 128-amino-acid chain; its full sequence is uncharacterized protein (128 aa).

The protein resides in the mitochondrion. This is an uncharacterized protein from Saccharomyces cerevisiae (strain ATCC 204508 / S288c) (Baker's yeast).